Here is a 1248-residue protein sequence, read N- to C-terminus: Apoptotic protease-activating factor 1 (1248 aa).

The 90-residue stretch at 1–90 (MDAKARNCLL…KDLAALLHDG (90 aa)) folds into the CARD domain. One can recognise an NB-ARC domain in the interval 104–415 (SGITSYVRTV…METEEVEDIL (312 aa)). ATP-binding positions include 154-161 (GMAGCGKS) and Arg265. A WD 1-1 repeat occupies 613–652 (PHTDAVYHACFSEDGQRIASCGADKTLQVFKAETGEKLLE). Residues 655 to 694 (AHEDEVLCCAFSTDDRFIATCSVDKKVKIWNSMTGELVHT) form a WD 1-2 repeat. Residues 697-738 (EHSEQVNCCHFTNSSHHLLLATGSSDCFLKLWDLNQKECRNT) form a WD 1-3 repeat. Residues 741 to 780 (GHTNSVNHCRFSPDDKLLASCSADGTLKLWDATSANERKS) form a WD 1-4 repeat. Residues 796-836 (DMEVIVKCCSWSADGARIMVAAKNKIFLFDIHTSGLLGEIH) form a WD 1-5 repeat. A WD 1-6 repeat occupies 838–877 (GHHSTIQYCDFSPQNHLAVVALSQYCVELWNTDSRSKVAD). The stretch at 880–910 (GHLSWVHGVMFSPDGSSFLTSSDDQTIRLWE) is one WD 1-7 repeat. The interval 910 to 921 (ETKKVCKNSAVM) is interpropeller linker. A WD 2-1 repeat occupies 922-958 (LKQEVDVVFQENEVMVLAVDHIRRLQLINGRTGQIDY). Residues 959–998 (LTEAQVSCCCLSPHLQYIAFGDENGAIEILELVNNRIFQS) form a WD 2-2 repeat. The stretch at 1001 to 1040 (QHKKTVWHIQFTADEKTLISSSDDAEIQVWNWQLDKCIFL) is one WD 2-3 repeat. Residues 1042–1080 (GHQETVKDFRLLKNSRLLSWSFDGTVKVWNIITGNKEKD) form a WD 2-4 repeat. The stretch at 1083–1122 (CHQGTVLSCDISHDATKFSSTSADKTAKIWSFDLLLPLHE) is one WD 2-5 repeat. A WD 2-6 repeat occupies 1125-1164 (GHNGCVRCSAFSVDSTLLATGDDNGEIRIWNVSNGELLHL). Residues 1175–1212 (THGGWVTDLCFSPDGKMLISAGGYIKWWNVVTGESSQT) form a WD 2-7 repeat. One copy of the WD 2-8 repeat lies at 1213–1248 (FYTNGTNLKKIHVSPDFKTYVTVDNLGILYILQTLE).

Monomer. Oligomerizes to a heptameric ring, known as the apoptosome, upon binding of cytochrome c and dATP. Oligomeric Apaf-1 and pro-caspase-9 bind to each other via their respective NH2-terminal CARD domains and consecutively mature caspase-9 is released from the complex. Pro-caspase-3 is recruited into the Apaf-1-pro-caspase-9 complex via interaction with pro-caspase-9. Interacts with APIP. Interacts (via CARD and NACHT domains) with NAIP/BIRC1 (via NACHT domain). Interacts with CIAO2A. In terms of tissue distribution, ubiquitous. Highest levels of expression in adult spleen and peripheral blood leukocytes, and in fetal brain, kidney and lung. Isoform 1 is expressed in heart, kidney and liver.

The protein localises to the cytoplasm. Its function is as follows. Oligomeric Apaf-1 mediates the cytochrome c-dependent autocatalytic activation of pro-caspase-9 (Apaf-3), leading to the activation of caspase-3 and apoptosis. This activation requires ATP. Isoform 6 is less effective in inducing apoptosis. The sequence is that of Apoptotic protease-activating factor 1 from Homo sapiens (Human).